The following is a 154-amino-acid chain: MTNKELQQLTETISLAFFKRPFTHTARFNNRLRTTGGRYLLKSHDIELNPKQYERYGKEELIGIIKHELCHYHLHLEGKGYKHGDKDFQEWLAKTGAPRYCKTAQDEQTVLVYTCTSCSRTYHRRRKINTQKYVCGTCHGKLKFLSKKVLHQRK.

In terms of domain architecture, SprT-like spans 6-144 (LQQLTETISL…CGTCHGKLKF (139 aa)). H67 serves as a coordination point for Zn(2+). E68 is a catalytic residue. A Zn(2+)-binding site is contributed by H71.

It belongs to the SprT family. Zn(2+) is required as a cofactor.

It localises to the cytoplasm. The sequence is that of Protein SprT-like from Shouchella clausii (strain KSM-K16) (Alkalihalobacillus clausii).